Here is a 99-residue protein sequence, read N- to C-terminus: MDLIGFGYAALVTFGSILGYKRRGGVPSLIAGLFVGFLAGYGAYRVSLDKRDVKLSLFTAFFLATIMGVRFKRSKKIMPAGLVAGLSLLMILRLVLLLL.

3 consecutive transmembrane segments (helical) span residues 1–21 (MDLI…LGYK), 24–44 (GGVP…YGAY), and 79–99 (PAGL…LLLL).

Belongs to the TMEM14 family.

Its subcellular location is the mitochondrion membrane. It localises to the endoplasmic reticulum membrane. Functionally, inhibits apoptosis via negative regulation of the mitochondrial outer membrane permeabilization involved in apoptotic signaling pathway. In Sus scrofa (Pig), this protein is Transmembrane protein 14A (TMEM14A).